The chain runs to 147 residues: uncharacterized protein (147 aa).

The HTH marR-type domain occupies 1 to 137 (MRDNTIGSLI…LYELMTKVHK (137 aa)). A DNA-binding region (H-T-H motif) is located at residues 53–76 (QMELAEKVTVTQGGISRMLTRLEK).

This is an uncharacterized protein from Bacillus anthracis.